A 232-amino-acid polypeptide reads, in one-letter code: Large ribosomal subunit protein uL1 (232 aa).

The protein belongs to the universal ribosomal protein uL1 family. In terms of assembly, part of the 50S ribosomal subunit.

In terms of biological role, binds directly to 23S rRNA. The L1 stalk is quite mobile in the ribosome, and is involved in E site tRNA release. Its function is as follows. Protein L1 is also a translational repressor protein, it controls the translation of the L11 operon by binding to its mRNA. The chain is Large ribosomal subunit protein uL1 from Xylella fastidiosa (strain M12).